A 240-amino-acid chain; its full sequence is LOB domain-containing protein 39 (240 aa).

Residues 1–107 (MSCNGCRVLR…VETVLRGGTL (107 aa)) enclose the LOB domain. Residues 200–233 (GDRPGSPSEESVTTSCWENGMRGDNKQKRNKGEK) are disordered. Residues 207–216 (SEESVTTSCW) show a composition bias toward polar residues.

This sequence belongs to the LOB domain-containing protein family. Expressed in young shoots, roots, stems, leaves and flowers.

The chain is LOB domain-containing protein 39 (LBD39) from Arabidopsis thaliana (Mouse-ear cress).